Here is a 140-residue protein sequence, read N- to C-terminus: Probable glycine cleavage system H protein 3 (140 aa).

One can recognise a Lipoyl-binding domain in the interval 29-110; that stretch reads VVSIGVTDLG…PYDSWIVKIR (82 aa). Lys-70 carries the post-translational modification N6-lipoyllysine.

Belongs to the GcvH family. As to quaternary structure, the glycine cleavage system is composed of four proteins: P, T, L and H. Requires (R)-lipoate as cofactor.

Its function is as follows. The glycine cleavage system catalyzes the degradation of glycine. The H protein shuttles the methylamine group of glycine from the P protein to the T protein. This chain is Probable glycine cleavage system H protein 3, found in Saccharolobus solfataricus (strain ATCC 35092 / DSM 1617 / JCM 11322 / P2) (Sulfolobus solfataricus).